The following is a 197-amino-acid chain: Protein jagunal (197 aa).

Topologically, residues 1–39 (MATRGGPMVAGTDGNDFEFRQRVAGTYQISLLNKSRLKY) are cytoplasmic. A helical membrane pass occupies residues 40–60 (CIFFHALLFFVMLAKLTSDIL). Residues 61–78 (DRLDIFVLEIEELEVPSP) are Lumenal-facing. The chain crosses the membrane as a helical span at residues 79 to 99 (LWWEYVWAGSLLTSFLGLSAA). Residues 100–109 (RGNKVREMQK) are Cytoplasmic-facing. The helical transmembrane segment at 110-130 (YMIAILVFAILPLLYCFAYYF) threads the bilayer. Residues 131-159 (SDVWEFATMDKSVELDETDIFIWRGYPYG) are Lumenal-facing. A helical membrane pass occupies residues 160–180 (VFWYAFCFVGFQVHGFTLYFA). Over 181–197 (YNLVKVWKARTATRKFQ) the chain is Cytoplasmic.

Belongs to the jagunal family.

The protein resides in the endoplasmic reticulum membrane. Its function is as follows. Required for endoplasmic reticulum organization and proper vesicular traffic during vitellogenesis. Required for oocyte and bristle growth. This chain is Protein jagunal, found in Drosophila pseudoobscura pseudoobscura (Fruit fly).